The sequence spans 131 residues: D-ribose pyranase (131 aa).

His-20 functions as the Proton donor in the catalytic mechanism. Residues Asp-28, His-98, and 120-122 (YAN) contribute to the substrate site.

Belongs to the RbsD / FucU family. RbsD subfamily. Homodecamer.

It is found in the cytoplasm. The catalysed reaction is beta-D-ribopyranose = beta-D-ribofuranose. It functions in the pathway carbohydrate metabolism; D-ribose degradation; D-ribose 5-phosphate from beta-D-ribopyranose: step 1/2. Catalyzes the interconversion of beta-pyran and beta-furan forms of D-ribose. This chain is D-ribose pyranase, found in Clostridium botulinum (strain Eklund 17B / Type B).